Consider the following 388-residue polypeptide: Chaperone protein DnaJ (388 aa).

Residues 5–70 (DYYTTLNISN…KKRNLYDQYG (66 aa)) form the J domain. The segment at 135–213 (GIKKEIRIPK…CFGQGRIKKS (79 aa)) adopts a CR-type zinc-finger fold. Residues cysteine 148, cysteine 151, cysteine 165, cysteine 168, cysteine 187, cysteine 190, cysteine 201, and cysteine 204 each coordinate Zn(2+). CXXCXGXG motif repeat units follow at residues 148–155 (CQSCYGYG), 165–172 (CTSCNGHG), 187–194 (CSTCRGTG), and 201–208 (CKICFGQG).

The protein belongs to the DnaJ family. As to quaternary structure, homodimer. Requires Zn(2+) as cofactor.

It localises to the cytoplasm. In terms of biological role, participates actively in the response to hyperosmotic and heat shock by preventing the aggregation of stress-denatured proteins and by disaggregating proteins, also in an autonomous, DnaK-independent fashion. Unfolded proteins bind initially to DnaJ; upon interaction with the DnaJ-bound protein, DnaK hydrolyzes its bound ATP, resulting in the formation of a stable complex. GrpE releases ADP from DnaK; ATP binding to DnaK triggers the release of the substrate protein, thus completing the reaction cycle. Several rounds of ATP-dependent interactions between DnaJ, DnaK and GrpE are required for fully efficient folding. Also involved, together with DnaK and GrpE, in the DNA replication of plasmids through activation of initiation proteins. The sequence is that of Chaperone protein DnaJ from Buchnera aphidicola subsp. Cinara cedri (strain Cc).